Reading from the N-terminus, the 56-residue chain is UPF0434 protein Sden_2197 (56 aa).

It belongs to the UPF0434 family.

This chain is UPF0434 protein Sden_2197, found in Shewanella denitrificans (strain OS217 / ATCC BAA-1090 / DSM 15013).